We begin with the raw amino-acid sequence, 46 residues long: Large ribosomal subunit protein bL34 (46 aa).

A compositionally biased stretch (basic residues) spans 1–17 (MTKRTLRGSVRKKKRTS). The segment at 1–26 (MTKRTLRGSVRKKKRTSGFRARMETP) is disordered.

This sequence belongs to the bacterial ribosomal protein bL34 family.

The sequence is that of Large ribosomal subunit protein bL34 (rpmH) from Pseudanabaena sp. (strain PCC 6903).